We begin with the raw amino-acid sequence, 253 residues long: Ubiquinone/menaquinone biosynthesis C-methyltransferase UbiE (253 aa).

S-adenosyl-L-methionine contacts are provided by residues Thr76, Asp97, 125–126 (NA), and Ser142.

Belongs to the class I-like SAM-binding methyltransferase superfamily. MenG/UbiE family.

It carries out the reaction a 2-demethylmenaquinol + S-adenosyl-L-methionine = a menaquinol + S-adenosyl-L-homocysteine + H(+). The enzyme catalyses a 2-methoxy-6-(all-trans-polyprenyl)benzene-1,4-diol + S-adenosyl-L-methionine = a 5-methoxy-2-methyl-3-(all-trans-polyprenyl)benzene-1,4-diol + S-adenosyl-L-homocysteine + H(+). It functions in the pathway quinol/quinone metabolism; menaquinone biosynthesis; menaquinol from 1,4-dihydroxy-2-naphthoate: step 2/2. It participates in cofactor biosynthesis; ubiquinone biosynthesis. Its function is as follows. Methyltransferase required for the conversion of demethylmenaquinol (DMKH2) to menaquinol (MKH2) and the conversion of 2-polyprenyl-6-methoxy-1,4-benzoquinol (DDMQH2) to 2-polyprenyl-3-methyl-6-methoxy-1,4-benzoquinol (DMQH2). The sequence is that of Ubiquinone/menaquinone biosynthesis C-methyltransferase UbiE from Xylella fastidiosa (strain M12).